We begin with the raw amino-acid sequence, 545 residues long: Calcium-binding mitochondrial carrier SAL1 (545 aa).

In terms of domain architecture, EF-hand 1 spans 11–46 (QRDIRYACLFKELDVKGNGQVTLDNLISAFEKNDHP). Residues Lys-65, Asp-70, Asp-93, Asp-95, Asp-97, Lys-99, and Glu-104 each coordinate Ca(2+). EF-hand domains lie at 80 to 115 (NAES…LDNQ), 120 to 155 (NELN…RGQA), and 156 to 191 (SHKK…VPRK). Positions 161 and 166 each coordinate Ca(2+). 3 Solcar repeats span residues 225–332 (IRGF…TKKI), 345–434 (LSKF…LKKW), and 452–541 (LSNL…LKKF). The next 6 helical transmembrane spans lie at 231–248 (FIAG…TAPF), 307–326 (GNGL…FGSF), 355–368 (GLAG…VYPI), 409–428 (GVTV…LGTF), 458–475 (LPMG…VYPI), and 516–535 (GLVP…YLCY).

Belongs to the mitochondrial carrier (TC 2.A.29) family.

The protein resides in the mitochondrion inner membrane. Functionally, calcium-dependent mitochondrial solute carrier. The protein is Calcium-binding mitochondrial carrier SAL1 (SAL1) of Saccharomyces cerevisiae (Baker's yeast).